Consider the following 468-residue polypeptide: uncharacterized protein (468 aa).

The segment at 447 to 468 (AVHVSNGDKPKVALPDTQLGSH) is disordered.

This sequence belongs to the mycobacterial PPE family.

This is an uncharacterized protein from Mycobacterium tuberculosis (strain ATCC 25618 / H37Rv).